A 255-amino-acid chain; its full sequence is (R)-S-adenosyl-L-methionine hydrolase (255 aa).

Adenosine contacts are provided by D9, D70, and N186. The (R)-S-adenosyl-L-methionine site is built by N186, S227, E232, and V235. V235 is an adenosine binding site.

The protein belongs to the SAM hydrolase / SAM-dependent halogenase family. In terms of assembly, homotrimer.

The enzyme catalyses (R)-S-adenosyl-L-methionine + H2O = adenosine + L-methionine + H(+). Functionally, catalyzes the hydrolysis of S-adenosyl-L-methionine (SAM) into adenosine and L-methionine. Does not have chlorinase or fluorinase activity. This Thermus thermophilus (strain ATCC 27634 / DSM 579 / HB8) protein is (R)-S-adenosyl-L-methionine hydrolase.